The chain runs to 743 residues: Catalase-peroxidase (743 aa).

The tract at residues 1-29 is disordered; sequence MNAESGENAGGGCPLGHGAGAPRKRPSNR. The segment covering 8–19 has biased composition (gly residues); the sequence is NAGGGCPLGHGA. Residues 100 to 222 constitute a cross-link (tryptophyl-tyrosyl-methioninium (Trp-Tyr) (with M-248)); that stretch reads WHSAGTYRIT…LGAVQMGLIY (123 aa). The Proton acceptor role is filled by His-101. Positions 222-248 form a cross-link, tryptophyl-tyrosyl-methioninium (Tyr-Met) (with W-100); sequence YVNPEGPNGNPDPKAAAVDIRETFARM. Heme b is bound at residue His-263.

Belongs to the peroxidase family. Peroxidase/catalase subfamily. In terms of assembly, homodimer or homotetramer. The cofactor is heme b. In terms of processing, formation of the three residue Trp-Tyr-Met cross-link is important for the catalase, but not the peroxidase activity of the enzyme.

It catalyses the reaction H2O2 + AH2 = A + 2 H2O. The enzyme catalyses 2 H2O2 = O2 + 2 H2O. In terms of biological role, bifunctional enzyme with both catalase and broad-spectrum peroxidase activity. The protein is Catalase-peroxidase of Stutzerimonas stutzeri (strain A1501) (Pseudomonas stutzeri).